The primary structure comprises 567 residues: Putative laccase-17 (567 aa).

Positions 1-22 (MPSRGCSCWLLSLALLCSLAAA) are cleaved as a signal peptide. Plastocyanin-like domains are found at residues 30-146 (VIRE…PRDG) and 158-310 (ELAP…YGAA). N-linked (GlcNAc...) asparagine glycosylation is present at asparagine 76. Cu cation contacts are provided by histidine 80, histidine 82, histidine 125, and histidine 127. N-linked (GlcNAc...) asparagine glycans are attached at residues asparagine 187, asparagine 241, asparagine 298, asparagine 312, asparagine 327, asparagine 365, asparagine 368, asparagine 378, asparagine 388, and asparagine 430. In terms of domain architecture, Plastocyanin-like 3 spans 415-551 (DFPANPPVQF…AMAFLVDDGV (137 aa)). The Cu cation site is built by histidine 468, histidine 471, histidine 473, histidine 530, cysteine 531, histidine 532, and histidine 536.

The protein belongs to the multicopper oxidase family. Cu cation serves as cofactor.

The protein localises to the secreted. Its subcellular location is the extracellular space. The protein resides in the apoplast. The catalysed reaction is 4 hydroquinone + O2 = 4 benzosemiquinone + 2 H2O. Lignin degradation and detoxification of lignin-derived products. The chain is Putative laccase-17 (LAC17) from Oryza sativa subsp. japonica (Rice).